The chain runs to 294 residues: Pyridoxal 5'-phosphate synthase subunit PdxS (294 aa).

Residue Asp-24 coordinates D-ribose 5-phosphate. The Schiff-base intermediate with D-ribose 5-phosphate role is filled by Lys-81. D-ribose 5-phosphate is bound at residue Gly-153. Arg-165 lines the D-glyceraldehyde 3-phosphate pocket. Residues Gly-214 and 235–236 each bind D-ribose 5-phosphate; that span reads GS.

Belongs to the PdxS/SNZ family. As to quaternary structure, in the presence of PdxT, forms a dodecamer of heterodimers.

It catalyses the reaction aldehydo-D-ribose 5-phosphate + D-glyceraldehyde 3-phosphate + L-glutamine = pyridoxal 5'-phosphate + L-glutamate + phosphate + 3 H2O + H(+). It participates in cofactor biosynthesis; pyridoxal 5'-phosphate biosynthesis. Functionally, catalyzes the formation of pyridoxal 5'-phosphate from ribose 5-phosphate (RBP), glyceraldehyde 3-phosphate (G3P) and ammonia. The ammonia is provided by the PdxT subunit. Can also use ribulose 5-phosphate and dihydroxyacetone phosphate as substrates, resulting from enzyme-catalyzed isomerization of RBP and G3P, respectively. In Bacillus pumilus (strain SAFR-032), this protein is Pyridoxal 5'-phosphate synthase subunit PdxS.